A 144-amino-acid chain; its full sequence is MTEVNINVTEIMEALPHRYPFLLVDRVIDIAEDEITAIKNVTINEEFFQGHFPQYPVMPGVLIMEALAQAAGVLELSKPENKGKLVFYAGMDNVKYKKQVTPGDQLVLHAKFIKRRGPIAVVEAEATVDGKLAAKGTLTFALGR.

His51 is an active-site residue.

The protein belongs to the thioester dehydratase family. FabZ subfamily.

Its subcellular location is the cytoplasm. The catalysed reaction is a (3R)-hydroxyacyl-[ACP] = a (2E)-enoyl-[ACP] + H2O. Functionally, involved in unsaturated fatty acids biosynthesis. Catalyzes the dehydration of short chain beta-hydroxyacyl-ACPs and long chain saturated and unsaturated beta-hydroxyacyl-ACPs. The polypeptide is 3-hydroxyacyl-[acyl-carrier-protein] dehydratase FabZ (fabZ2) (Lactococcus lactis subsp. lactis (strain IL1403) (Streptococcus lactis)).